Reading from the N-terminus, the 335-residue chain is 3-ketodihydrosphingosine reductase TSC10 (335 aa).

Residues Gly42, Ser44, Ser45, and Gly46 each contribute to the NADPH site. The GXSXG motif lies at 42–46 (GGSSG). NADP(+) is bound at residue Leu47. Residues Arg67, Asp68, Lys71, Asp95, and Leu96 each coordinate NADPH. NADP(+) is bound at residue Asp95. Residues Tyr190, Lys194, and Ile223 each contribute to the NADP(+) site. Tyr190 serves as the catalytic Proton acceptor. The active-site Lowers pKa of active site Tyr is Lys194. The chain crosses the membrane as a helical span at residues 288–308 (TNNFLLDTLWLIVSSVGVPIW).

It belongs to the short-chain dehydrogenases/reductases (SDR) family.

The protein resides in the endoplasmic reticulum membrane. It catalyses the reaction sphinganine + NADP(+) = 3-oxosphinganine + NADPH + H(+). The protein operates within lipid metabolism; sphingolipid metabolism. Catalyzes the reduction of 3'-oxosphinganine (3-ketodihydrosphingosine/KDS) to sphinganine (dihydrosphingosine/DHS), the second step of de novo sphingolipid biosynthesis. The sequence is that of 3-ketodihydrosphingosine reductase TSC10 (TSC10) from Cryptococcus neoformans var. neoformans serotype D (strain B-3501A) (Filobasidiella neoformans).